The primary structure comprises 168 residues: Disulfide bond formation protein B 2 (168 aa).

Topologically, residues Met-1–Thr-14 are cytoplasmic. The chain crosses the membrane as a helical span at residues Leu-15–Trp-31. At Ile-32–Tyr-49 the chain is on the periplasmic side. The cysteines at positions 41 and 44 are disulfide-linked. The helical transmembrane segment at Leu-50 to Gly-64 threads the bilayer. The Cytoplasmic segment spans residues Gly-65–Ala-69. Residues Leu-70–Val-87 form a helical membrane-spanning segment. Over Arg-88–Met-142 the chain is Periplasmic. The cysteines at positions 100 and 128 are disulfide-linked. Residues Trp-143–Ala-161 form a helical membrane-spanning segment. Residues Gln-162 to Ala-168 are Cytoplasmic-facing.

Belongs to the DsbB family.

It localises to the cell inner membrane. In terms of biological role, required for disulfide bond formation in some periplasmic proteins. Acts by oxidizing the DsbA protein. The sequence is that of Disulfide bond formation protein B 2 from Burkholderia lata (strain ATCC 17760 / DSM 23089 / LMG 22485 / NCIMB 9086 / R18194 / 383).